Here is a 363-residue protein sequence, read N- to C-terminus: Galactokinase (363 aa).

16–19 (EHTD) contacts substrate. ATP is bound by residues Ser50 and 103–109 (GSGLSSS). Positions 109 and 141 each coordinate Mg(2+). Asp153 acts as the Proton acceptor in catalysis. A substrate-binding site is contributed by Tyr205.

Belongs to the GHMP kinase family. GalK subfamily.

Its subcellular location is the cytoplasm. It carries out the reaction alpha-D-galactose + ATP = alpha-D-galactose 1-phosphate + ADP + H(+). The protein operates within carbohydrate metabolism; galactose metabolism. Catalyzes the transfer of the gamma-phosphate of ATP to D-galactose to form alpha-D-galactose-1-phosphate (Gal-1-P). This Mycobacterium tuberculosis (strain ATCC 25177 / H37Ra) protein is Galactokinase.